Consider the following 208-residue polypeptide: MPVTVVDHPLVRHKLGLLRENNISTKNFRELANEIGRLLTYEATKSLPTEKKTIHGWAGPVEVDQLVGKKITVVPILRAGLGMMDGVVDMIPGVKVSVVGMYRNEETLEPVRYYVKLAKKIHKRHAMILDPMLATGGTLVATINLLKEAGCRRIMGLFLVCAPEGLARLEKEHPDVEVYTAAIDERLNENGYILPGLGDAGDKIFGTK.

5-phospho-alpha-D-ribose 1-diphosphate contacts are provided by residues arginine 78, arginine 103, and 130–138 (DPMLATGGT). Residues isoleucine 193 and 198–200 (GDA) each bind uracil. Residue aspartate 199 coordinates 5-phospho-alpha-D-ribose 1-diphosphate.

It belongs to the UPRTase family. It depends on Mg(2+) as a cofactor.

It carries out the reaction UMP + diphosphate = 5-phospho-alpha-D-ribose 1-diphosphate + uracil. It functions in the pathway pyrimidine metabolism; UMP biosynthesis via salvage pathway; UMP from uracil: step 1/1. Allosterically activated by GTP. Its function is as follows. Catalyzes the conversion of uracil and 5-phospho-alpha-D-ribose 1-diphosphate (PRPP) to UMP and diphosphate. This is Uracil phosphoribosyltransferase from Solidesulfovibrio magneticus (strain ATCC 700980 / DSM 13731 / RS-1) (Desulfovibrio magneticus).